Here is a 261-residue protein sequence, read N- to C-terminus: uncharacterized protein (261 aa).

A signal peptide spans 1 to 20 (MKIQVMLIIIFVGIFTICLA). N-linked (GlcNAc...) asparagine; by host glycosylation is found at Asn-22 and Asn-27.

It localises to the secreted. This is an uncharacterized protein from Acanthamoeba polyphaga (Amoeba).